We begin with the raw amino-acid sequence, 356 residues long: SERTA domain-containing protein 4 (356 aa).

Residues 33–53 (SYGGPSPPGPAQAPLQGDRGA) form a disordered region. The SERTA domain maps to 101-147 (IFEERAHILYMSLEKLKFIDDPEVYLRRSVLINNLMKRIHGEIIMQN). Residues 215–232 (TAASSPSASSSSSSSSSS) are compositionally biased toward low complexity. Disordered regions lie at residues 215–238 (TAAS…LPLP), 280–302 (KLND…HEPV), and 332–356 (WKKS…GSKI). Residues 280 to 292 (KLNDEKANDDTNR) show a composition bias toward basic and acidic residues.

The chain is SERTA domain-containing protein 4 (SERTAD4) from Homo sapiens (Human).